The sequence spans 377 residues: Porphobilinogen deaminase (377 aa).

C269 bears the S-(dipyrrolylmethanemethyl)cysteine mark.

The protein belongs to the HMBS family. As to quaternary structure, monomer. Dipyrromethane serves as cofactor.

It catalyses the reaction 4 porphobilinogen + H2O = hydroxymethylbilane + 4 NH4(+). It functions in the pathway porphyrin-containing compound metabolism; protoporphyrin-IX biosynthesis; coproporphyrinogen-III from 5-aminolevulinate: step 2/4. Its function is as follows. Tetrapolymerization of the monopyrrole PBG into the hydroxymethylbilane pre-uroporphyrinogen in several discrete steps. In Micrococcus luteus (strain ATCC 4698 / DSM 20030 / JCM 1464 / CCM 169 / CCUG 5858 / IAM 1056 / NBRC 3333 / NCIMB 9278 / NCTC 2665 / VKM Ac-2230) (Micrococcus lysodeikticus), this protein is Porphobilinogen deaminase.